Here is a 216-residue protein sequence, read N- to C-terminus: Small ribosomal subunit protein uS3c (216 aa).

The KH type-2 domain maps to 43-118 (IKNYLQKNMR…KLNIAITRIT (76 aa)).

It belongs to the universal ribosomal protein uS3 family. As to quaternary structure, part of the 30S ribosomal subunit.

The protein resides in the plastid. Its subcellular location is the chloroplast. The sequence is that of Small ribosomal subunit protein uS3c (rps3) from Eucalyptus globulus subsp. globulus (Tasmanian blue gum).